A 492-amino-acid chain; its full sequence is Catalase isozyme 2 (492 aa).

Catalysis depends on residues His65 and Asn138. Tyr347 lines the heme pocket.

This sequence belongs to the catalase family. As to quaternary structure, homotetramer. It depends on heme as a cofactor. As to expression, high levels in green cotyledons, mature leaf, stem and green hypocotyl.

The protein localises to the peroxisome. It catalyses the reaction 2 H2O2 = O2 + 2 H2O. Its function is as follows. Occurs in almost all aerobically respiring organisms and serves to protect cells from the toxic effects of hydrogen peroxide. This is Catalase isozyme 2 (CAT2) from Cucurbita pepo (Vegetable marrow).